The chain runs to 651 residues: ATP-binding cassette sub-family G member 5 (651 aa).

Residues 1-32 (MGDLSSLTPGGSMGLQVNRGSQSSLEGAPATA) are disordered. Topologically, residues 1-383 (MGDLSSLTPG…RVTRNLVRNK (383 aa)) are cytoplasmic. Residues 52–293 (RPWWDITSCR…FNDCGYPCPE (242 aa)) enclose the ABC transporter domain. Residue 86–93 (GSSGSGKT) participates in ATP binding. A helical membrane pass occupies residues 384–404 (LAVITRLLQNLIMGLFLLFFV). Residues 388–645 (TRLLQNLIMG…ILGIVVFKIR (258 aa)) enclose the ABC transmembrane type-2 domain. The Extracellular portion of the chain corresponds to 405–421 (LRVRSNVLKGAIQDRVG). A helical transmembrane segment spans residues 422–442 (LLYQFVGATPYTGMLNAVNLF). Residues 443–467 (PVLRAVSDQESQDGLYQKWQMMLAY) lie on the Cytoplasmic side of the membrane. Residues 468 to 489 (ALHVLPFSVVATMIFSSVCYWT) traverse the membrane as a helical segment. At 490-500 (LGLHPEVARFG) the chain is on the extracellular side. A helical transmembrane segment spans residues 501–521 (YFSAALLAPHLIGEFLTLVLL). Over 522–528 (GIVQNPN) the chain is Cytoplasmic. A helical transmembrane segment spans residues 529 to 549 (IVNSVVALLSIAGVLVGSGFL). Residues 550–623 (RNIQEMPIPF…PGATSRFTMN (74 aa)) lie on the Extracellular side of the membrane. Residues asparagine 584 and asparagine 591 are each glycosylated (N-linked (GlcNAc...) asparagine). Residues 624–644 (FLILYSFIPALVILGIVVFKI) form a helical membrane-spanning segment. At 645-651 (RDHLISR) the chain is on the cytoplasmic side.

Belongs to the ABC transporter superfamily. ABCG family. Eye pigment precursor importer (TC 3.A.1.204) subfamily. In terms of assembly, heterodimer with ABCG8. The cofactor is Mg(2+). Post-translationally, N-glycosylated. In terms of tissue distribution, strongly expressed in the liver, lower levels in the small intestine and colon.

It is found in the cell membrane. It localises to the apical cell membrane. It catalyses the reaction cholesterol(in) + ATP + H2O = cholesterol(out) + ADP + phosphate + H(+). The catalysed reaction is sitosterol(in) + ATP + H2O = sitosterol(out) + ADP + phosphate + H(+). Its activity is regulated as follows. The ATPase activity of the heterodimer is stimulated by cholate. Taurocholate, glycocholate, taurochenodeoxycholate, glycochenodeoxycholate and taurodeoxycholate also stimulate ATPase activity, but to a lower degree. Glycodeoxycholate has no significant effect on ATPase activity. ATPase activity is inhibited by vanadate and by berillium fluoride. ABCG5 and ABCG8 form an obligate heterodimer that mediates Mg(2+)- and ATP-dependent sterol transport across the cell membrane. Plays an essential role in the selective transport of dietary plant sterols and cholesterol in and out of the enterocytes and in the selective sterol excretion by the liver into bile. Required for normal sterol homeostasis. The heterodimer with ABCG8 has ATPase activity. The chain is ATP-binding cassette sub-family G member 5 from Homo sapiens (Human).